Consider the following 386-residue polypeptide: Succinate--CoA ligase [ADP-forming] subunit beta (386 aa).

In terms of domain architecture, ATP-grasp spans 9-243 (KQLFRKYSIP…PAEDDPAEAE (235 aa)). ATP-binding positions include K45, 52–54 (GRG), E98, V101, and E106. Residues N198 and D212 each coordinate Mg(2+). Substrate contacts are provided by residues N263 and 320-322 (GIL).

Belongs to the succinate/malate CoA ligase beta subunit family. In terms of assembly, heterotetramer of two alpha and two beta subunits. Requires Mg(2+) as cofactor.

The catalysed reaction is succinate + ATP + CoA = succinyl-CoA + ADP + phosphate. The enzyme catalyses GTP + succinate + CoA = succinyl-CoA + GDP + phosphate. It functions in the pathway carbohydrate metabolism; tricarboxylic acid cycle; succinate from succinyl-CoA (ligase route): step 1/1. Its function is as follows. Succinyl-CoA synthetase functions in the citric acid cycle (TCA), coupling the hydrolysis of succinyl-CoA to the synthesis of either ATP or GTP and thus represents the only step of substrate-level phosphorylation in the TCA. The beta subunit provides nucleotide specificity of the enzyme and binds the substrate succinate, while the binding sites for coenzyme A and phosphate are found in the alpha subunit. The chain is Succinate--CoA ligase [ADP-forming] subunit beta from Desulfotalea psychrophila (strain LSv54 / DSM 12343).